The following is a 113-amino-acid chain: T cell receptor alpha variable 8-4 (113 aa).

Positions Met-1–Ala-20 are cleaved as a signal peptide. An Ig-like domain is found at Gln-21–Ser-113. An intrachain disulfide couples Cys-42 to Cys-110. Asn-43 carries an N-linked (GlcNAc...) asparagine glycan.

Alpha-beta TR is a heterodimer composed of an alpha and beta chain; disulfide-linked. The alpha-beta TR is associated with the transmembrane signaling CD3 coreceptor proteins to form the TR-CD3 (TcR or TCR). The assembly of alpha-beta TR heterodimers with CD3 occurs in the endoplasmic reticulum where a single alpha-beta TR heterodimer associates with one CD3D-CD3E heterodimer, one CD3G-CD3E heterodimer and one CD247 homodimer forming a stable octameric structure. CD3D-CD3E and CD3G-CD3E heterodimers preferentially associate with TR alpha and TR beta chains, respectively. The association of the CD247 homodimer is the last step of TcR assembly in the endoplasmic reticulum and is required for transport to the cell surface.

Its subcellular location is the cell membrane. Its function is as follows. V region of the variable domain of T cell receptor (TR) alpha chain that participates in the antigen recognition. Alpha-beta T cell receptors are antigen specific receptors which are essential to the immune response and are present on the cell surface of T lymphocytes. Recognize peptide-major histocompatibility (MH) (pMH) complexes that are displayed by antigen presenting cells (APC), a prerequisite for efficient T cell adaptive immunity against pathogens. Binding of alpha-beta TR to pMH complex initiates TR-CD3 clustering on the cell surface and intracellular activation of LCK that phosphorylates the ITAM motifs of CD3G, CD3D, CD3E and CD247 enabling the recruitment of ZAP70. In turn ZAP70 phosphorylates LAT, which recruits numerous signaling molecules to form the LAT signalosome. The LAT signalosome propagates signal branching to three major signaling pathways, the calcium, the mitogen-activated protein kinase (MAPK) kinase and the nuclear factor-kappa-B (NF-kB) pathways, leading to the mobilization of transcription factors that are critical for gene expression and essential for T cell growth and differentiation. The T cell repertoire is generated in the thymus, by V-(D)-J rearrangement. This repertoire is then shaped by intrathymic selection events to generate a peripheral T cell pool of self-MH restricted, non-autoaggressive T cells. Post-thymic interaction of alpha-beta TR with the pMH complexes shapes TR structural and functional avidity. This is T cell receptor alpha variable 8-4 from Homo sapiens (Human).